Here is a 397-residue protein sequence, read N- to C-terminus: Riboflavin biosynthesis protein RibBA (397 aa).

Positions 1–199 are DHBP synthase; sequence MFHRIEEALE…IEDLIAYRRH (199 aa). Residues 26 to 27, Asp31, 138 to 142, and Glu162 contribute to the D-ribulose 5-phosphate site; these read RE and RAGHT. Glu27 is a Mg(2+) binding site. A Mg(2+)-binding site is contributed by His141. Positions 200–397 are GTP cyclohydrolase II; it reads HETLVTREVE…VNKLGHLLNL (198 aa). 250–254 provides a ligand contact to GTP; it reads RVHSE. Zn(2+) contacts are provided by Cys255, Cys266, and Cys268. GTP-binding positions include Gln271, 293–295, and Thr315; that span reads EGR. The active-site Proton acceptor; for GTP cyclohydrolase activity is the Asp327. The Nucleophile; for GTP cyclohydrolase activity role is filled by Arg329. GTP-binding residues include Thr350 and Lys355.

This sequence in the N-terminal section; belongs to the DHBP synthase family. In the C-terminal section; belongs to the GTP cyclohydrolase II family. It depends on Mg(2+) as a cofactor. Requires Mn(2+) as cofactor. The cofactor is Zn(2+).

It carries out the reaction D-ribulose 5-phosphate = (2S)-2-hydroxy-3-oxobutyl phosphate + formate + H(+). The enzyme catalyses GTP + 4 H2O = 2,5-diamino-6-hydroxy-4-(5-phosphoribosylamino)-pyrimidine + formate + 2 phosphate + 3 H(+). It participates in cofactor biosynthesis; riboflavin biosynthesis; 2-hydroxy-3-oxobutyl phosphate from D-ribulose 5-phosphate: step 1/1. Its pathway is cofactor biosynthesis; riboflavin biosynthesis; 5-amino-6-(D-ribitylamino)uracil from GTP: step 1/4. Its function is as follows. Catalyzes the conversion of D-ribulose 5-phosphate to formate and 3,4-dihydroxy-2-butanone 4-phosphate. Functionally, catalyzes the conversion of GTP to 2,5-diamino-6-ribosylamino-4(3H)-pyrimidinone 5'-phosphate (DARP), formate and pyrophosphate. In Bacillus cereus (strain ATCC 10987 / NRS 248), this protein is Riboflavin biosynthesis protein RibBA.